A 204-amino-acid polypeptide reads, in one-letter code: 3,4-dihydroxy-2-butanone 4-phosphate synthase (204 aa).

E30 contributes to the Mg(2+) binding site. D34 contributes to the D-ribulose 5-phosphate binding site. C59 bears the S-glutathionyl cysteine mark. Residues T85 and 142–146 (RRGHT) each bind D-ribulose 5-phosphate. Residue H145 participates in Mg(2+) binding.

Homodimer. Mg(2+) serves as cofactor. It depends on Mn(2+) as a cofactor. In terms of processing, S-glutathionylation is reversible and dependent on a glutaredoxin.

The catalysed reaction is D-ribulose 5-phosphate = (2S)-2-hydroxy-3-oxobutyl phosphate + formate + H(+). Its pathway is cofactor biosynthesis; riboflavin biosynthesis; 2-hydroxy-3-oxobutyl phosphate from D-ribulose 5-phosphate: step 1/1. Its function is as follows. Catalyzes the conversion of D-ribulose 5-phosphate to formate and 3,4-dihydroxy-2-butanone 4-phosphate. The polypeptide is 3,4-dihydroxy-2-butanone 4-phosphate synthase (RIB3) (Candida albicans (strain SC5314 / ATCC MYA-2876) (Yeast)).